A 328-amino-acid polypeptide reads, in one-letter code: Malate dehydrogenase (328 aa).

12–18 provides a ligand contact to NAD(+); it reads GAAGQIA. Residues Arg-93 and Arg-99 each contribute to the substrate site. NAD(+) is bound by residues Asn-106, Gln-113, and 130 to 132; that span reads VGN. Substrate contacts are provided by Asn-132 and Arg-163. The Proton acceptor role is filled by His-188.

The protein belongs to the LDH/MDH superfamily. MDH type 2 family.

It catalyses the reaction (S)-malate + NAD(+) = oxaloacetate + NADH + H(+). Catalyzes the reversible oxidation of malate to oxaloacetate. This chain is Malate dehydrogenase, found in Burkholderia lata (strain ATCC 17760 / DSM 23089 / LMG 22485 / NCIMB 9086 / R18194 / 383).